Reading from the N-terminus, the 530-residue chain is Autoinducer-2 kinase (530 aa).

It belongs to the FGGY kinase family.

It localises to the cytoplasm. It carries out the reaction (S)-4,5-dihydroxypentane-2,3-dione + ATP = (2S)-2-hydroxy-3,4-dioxopentyl phosphate + ADP + H(+). Functionally, catalyzes the phosphorylation of autoinducer-2 (AI-2) to phospho-AI-2, which subsequently inactivates the transcriptional regulator LsrR and leads to the transcription of the lsr operon. Phosphorylates the ring-open form of (S)-4,5-dihydroxypentane-2,3-dione (DPD), which is the precursor to all AI-2 signaling molecules, at the C5 position. The protein is Autoinducer-2 kinase of Salmonella paratyphi B (strain ATCC BAA-1250 / SPB7).